A 651-amino-acid chain; its full sequence is Acetyl-coenzyme A synthetase (651 aa).

CoA is bound by residues Arg189–Lys192, Thr311, and Asn335. ATP contacts are provided by residues Gly387–Pro389, Asp411–Thr416, Asp500, and Arg515. Residue Ser523 participates in CoA binding. Arg526 provides a ligand contact to ATP. Residues Val537, His539, and Val542 each contribute to the Mg(2+) site. Arg584 is a CoA binding site. Lys609 bears the N6-acetyllysine mark.

It belongs to the ATP-dependent AMP-binding enzyme family. The cofactor is Mg(2+). Acetylated. Deacetylation by the SIR2-homolog deacetylase activates the enzyme.

It catalyses the reaction acetate + ATP + CoA = acetyl-CoA + AMP + diphosphate. In terms of biological role, catalyzes the conversion of acetate into acetyl-CoA (AcCoA), an essential intermediate at the junction of anabolic and catabolic pathways. AcsA undergoes a two-step reaction. In the first half reaction, AcsA combines acetate with ATP to form acetyl-adenylate (AcAMP) intermediate. In the second half reaction, it can then transfer the acetyl group from AcAMP to the sulfhydryl group of CoA, forming the product AcCoA. The chain is Acetyl-coenzyme A synthetase from Rhizobium etli (strain CIAT 652).